Here is a 364-residue protein sequence, read N- to C-terminus: DNA polymerase IV (364 aa).

The UmuC domain occupies 14–198 (IIHIDMDAFF…LPIEKFHGVG (185 aa)). Aspartate 18 and aspartate 116 together coordinate Mg(2+). Glutamate 117 is an active-site residue.

This sequence belongs to the DNA polymerase type-Y family. Monomer. Requires Mg(2+) as cofactor.

Its subcellular location is the cytoplasm. The enzyme catalyses DNA(n) + a 2'-deoxyribonucleoside 5'-triphosphate = DNA(n+1) + diphosphate. Poorly processive, error-prone DNA polymerase involved in untargeted mutagenesis. Copies undamaged DNA at stalled replication forks, which arise in vivo from mismatched or misaligned primer ends. These misaligned primers can be extended by PolIV. Exhibits no 3'-5' exonuclease (proofreading) activity. May be involved in translesional synthesis, in conjunction with the beta clamp from PolIII. The protein is DNA polymerase IV of Streptococcus pyogenes serotype M12 (strain MGAS2096).